The following is a 166-amino-acid chain: Thiamine precursor transporter HmpT (166 aa).

5 helical membrane passes run 14-34 (LLAI…FPIP), 35-55 (GSAG…VFLF), 62-82 (IIGG…NYMF), 105-125 (FLLS…LMYG), and 126-146 (WGSA…GFVL).

As to quaternary structure, in E.coli forms a stable energy-coupling factor (ECF) transporter complex composed of 2 membrane-embedded substrate-binding protein (S component), 2 ATP-binding proteins (A and A' components) and 2 transmembrane proteins (T component), probably with a stoichiometry of 2:1:1:2. May be able to interact with more than 1 S component at a time.

The protein resides in the cell membrane. In terms of biological role, probably a thiamine precursor-binding protein that interacts with the energy-coupling factor (ECF) ABC-transporter complex. Unlike classic ABC transporters this ECF transporter provides the energy necessary to transport a number of different substrates. The substrates themselves are bound by transmembrane, not extracytoplasmic soluble proteins. The sequence is that of Thiamine precursor transporter HmpT (hmpT) from Lactococcus lactis subsp. cremoris (strain MG1363).